We begin with the raw amino-acid sequence, 183 residues long: uncharacterized protein (183 aa).

The protein belongs to the asfivirus S183L family.

This is an uncharacterized protein from African swine fever virus (isolate Pig/Kenya/KEN-50/1950) (ASFV).